Here is a 254-residue protein sequence, read N- to C-terminus: Major prion protein (254 aa).

The N-terminal stretch at 1-22 is a signal peptide; sequence MANLGYWLLALFVTMWTDVGLC. Residues 23-38 form an interaction with ADGRG6 region; sequence KKRPKPGGWNTGGSRY. Positions 23–231 are interaction with GRB2, ERI3 and SYN1; the sequence is KKRPKPGGWN…QAYYDGRRSS (209 aa). A disordered region spans residues 25 to 104; it reads RPKPGGWNTG…HNQWNKPSKP (80 aa). Position 44 is a hydroxyproline (Pro-44). A run of 5 repeats spans residues 51-58, 59-66, 67-74, 75-82, and 83-90. Positions 51–90 are 5 X 8 AA tandem repeats of P-H-G-G-G-W-G-Q; the sequence is PQGGTWGQPHGGGWGQPHGGSWGQPHGGSWGQPHGGGWGQ. Gly residues predominate over residues 54–94; the sequence is GTWGQPHGGGWGQPHGGSWGQPHGGSWGQPHGGGWGQGGGT. Cu(2+) is bound by residues His-60, Gly-61, Gly-62, His-68, Gly-69, Gly-70, His-76, Gly-77, Gly-78, His-84, Gly-85, and Gly-86. Residues Cys-178 and Cys-213 are joined by a disulfide bond. Residues Asn-180 and Asn-196 are each glycosylated (N-linked (GlcNAc...) asparagine). Ser-230 carries the GPI-anchor amidated serine lipid modification. Residues 231 to 254 constitute a propeptide, removed in mature form; sequence SSTVLFSSPPVILLISFLIFLIVG.

This sequence belongs to the prion family. As to quaternary structure, monomer and homodimer. Has a tendency to aggregate into amyloid fibrils containing a cross-beta spine, formed by a steric zipper of superposed beta-strands. Soluble oligomers may represent an intermediate stage on the path to fibril formation. Copper binding may promote oligomerization. Interacts with GRB2, APP, ERI3/PRNPIP and SYN1. Mislocalized cytosolically exposed PrP interacts with MGRN1; this interaction alters MGRN1 subcellular location and causes lysosomal enlargement. Interacts with APP. Interacts with KIAA1191. Interacts with ADGRG6. In terms of processing, N-glycosylated. Highly expressed in the brain, lung, kidney and heart. Expressed at low levels in the liver and spleen.

It is found in the cell membrane. The protein localises to the golgi apparatus. In terms of biological role, its primary physiological function is unclear. May play a role in neuronal development and synaptic plasticity. May be required for neuronal myelin sheath maintenance. May promote myelin homeostasis through acting as an agonist for ADGRG6 receptor. May play a role in iron uptake and iron homeostasis. Soluble oligomers are toxic to cultured neuroblastoma cells and induce apoptosis (in vitro). Association with GPC1 (via its heparan sulfate chains) targets PRNP to lipid rafts. Also provides Cu(2+) or Zn(2+) for the ascorbate-mediated GPC1 deaminase degradation of its heparan sulfate side chains. The chain is Major prion protein (Prnp) from Mus musculus (Mouse).